Reading from the N-terminus, the 142-residue chain is Mitochondrial import inner membrane translocase subunit TIM22-4 (142 aa).

Helical transmembrane passes span 21-41 (VTSGVMGGGLGLMMGLFLGAL), 70-88 (SCKTFAVMGLVFSAAECIV), 97-113 (TVNTAIAGCVTGGSMSA), and 120-137 (ACIGCAGFAIFSVLIEKF).

It belongs to the Tim17/Tim22/Tim23 family.

The protein localises to the mitochondrion inner membrane. Its function is as follows. Essential core component of the TIM22 complex, a complex that mediates the import and insertion of multi-pass transmembrane proteins into the mitochondrial inner membrane. The polypeptide is Mitochondrial import inner membrane translocase subunit TIM22-4 (TIM22-4) (Arabidopsis thaliana (Mouse-ear cress)).